Reading from the N-terminus, the 75-residue chain is Cruzioseptin-7 (75 aa).

Residues 1–22 (MAKLKKSLFLVLFLGLVSLSIC) form the signal peptide. Positions 23–43 (EEEKREEENEEVQEDDDQSEE) are excised as a propeptide. The tract at residues 25 to 44 (EKREEENEEVQEDDDQSEEK) is disordered. Residues 30 to 41 (ENEEVQEDDDQS) show a composition bias toward acidic residues.

Expressed by the skin glands.

It is found in the secreted. Its function is as follows. Has antimicrobial activity. This chain is Cruzioseptin-7, found in Cruziohyla calcarifer (Splendid leaf frog).